The sequence spans 141 residues: Large ribosomal subunit protein uL11 (141 aa).

Belongs to the universal ribosomal protein uL11 family. Part of the ribosomal stalk of the 50S ribosomal subunit. Interacts with L10 and the large rRNA to form the base of the stalk. L10 forms an elongated spine to which L12 dimers bind in a sequential fashion forming a multimeric L10(L12)X complex. In terms of processing, one or more lysine residues are methylated.

Its function is as follows. Forms part of the ribosomal stalk which helps the ribosome interact with GTP-bound translation factors. This Aster yellows witches'-broom phytoplasma (strain AYWB) protein is Large ribosomal subunit protein uL11.